A 317-amino-acid polypeptide reads, in one-letter code: Melanocyte-stimulating hormone receptor (317 aa).

At 1-37 the chain is on the extracellular side; that stretch reads MPMQGAQRKLLGSLNSTPTATSNLGLAANHTGAPCLE. N-linked (GlcNAc...) asparagine glycosylation is present at Asn29. A helical transmembrane segment spans residues 38–63; sequence VSIPDGLFLSLGLVSLVENVLVVAAV. Residues 64–72 lie on the Cytoplasmic side of the membrane; it reads AKNRNLHSS. The chain crosses the membrane as a helical span at residues 73 to 93; sequence MYCFICCLALSDLLVSGSNML. Residues 94-118 are Extracellular-facing; sequence ETAVILLLETGALATRTSVVQQLHN. A helical transmembrane segment spans residues 119–140; sequence TINVLTCSSMLCSLCFLGAIAV. Residues 141 to 163 are Cytoplasmic-facing; that stretch reads DRYISIFYALRYHSIMTLPRAQR. Residues 164–183 form a helical membrane-spanning segment; that stretch reads AIAAIWVASVLSSTLFITYY. At 184–191 the chain is on the extracellular side; the sequence is DHAAVLLC. The chain crosses the membrane as a helical span at residues 192 to 211; it reads LVVFFLAMLVLMAVLYVHML. At 212–240 the chain is on the cytoplasmic side; that stretch reads ARACQHAHGIIRLHKRQTPAHQGFGLRGA. A helical transmembrane segment spans residues 241-266; the sequence is ATLTILLGIFFLCWGPFFLHLTLVVF. Over 267–279 the chain is Extracellular; the sequence is CPQHLTCSCIFKN. The chain crosses the membrane as a helical span at residues 280–300; the sequence is FKVFLTLIICNTIIDPLIYAF. Topologically, residues 301–317 are cytoplasmic; the sequence is RSQELRRTLKEVLLCSW. Cys315 carries S-palmitoyl cysteine lipidation.

This sequence belongs to the G-protein coupled receptor 1 family. Interacts with MGRN1, but does not undergo MGRN1-mediated ubiquitination; this interaction competes with GNAS-binding and thus inhibits agonist-induced cAMP production. Interacts with OPN3; the interaction results in a decrease in MC1R-mediated cAMP signaling and ultimately a decrease in melanin production in melanocytes.

It is found in the cell membrane. In terms of biological role, receptor for MSH (alpha, beta and gamma) and ACTH. The activity of this receptor is mediated by G proteins which activate adenylate cyclase. Mediates melanogenesis, the production of eumelanin (black/brown) and phaeomelanin (red/yellow), via regulation of cAMP signaling in melanocytes. The chain is Melanocyte-stimulating hormone receptor (MC1R) from Saguinus oedipus (Cotton-top tamarin).